The chain runs to 1040 residues: MQVLPPSSTGGPSRLFIMRPVATTLLMVAILLAGIIGYRALPVSALPEVDYPTIQVVTLYPGASPDVMTSAVTAPLERQFGQMSGLKQMSSQSSGGASVITLQFQLTLPLDVAEQEVQAAINAATNLLPSDLPNPPVYSKVNPADPPIMTLAVTSTAMPMTQVEDMVETRVAQKISQISGVGLVTLSGGQRPAVRVKLNAQAIAALGLTSETVRTAITGANVNSAKGSLDGPSRAVTLSANDQMQSAEEYRQLIIAYQNGAPIRLGDVATVEQGAENSWLGAWANKEQAIVMNVQRQPGANIISTADSIRQMLPQLTESLPKSVKVTVLSDRTTNIRASVDDTQFELMMAIALVVMIIYLFLRNIPATIIPGVAVPLSLIGTFAVMVFLDFSINNLTLMALTIATGFVVDDAIVVIENISRYIEKGEKPLAAALKGAGEIGFTIISLTFSLIAVLIPLLFMGDIVGRLFREFAITLAVAILISAVVSLTLTPMMCARMLSQESLRKQNRFSRASEKMFDRIIAAYGRGLAKVLNHPWLTLSVALSTLLLSVLLWVFIPKGFFPVQDNGIIQGTLQAPQSSSFANMAQRQRQVADVILQDPAVQSLTSFVGVDGTNPSLNSARLQINLKPLDERDDRVQKVIARLQTAVDKVPGVDLFLQPTQDLTIDTQVSRTQYQFTLQATSLDALSTWVPQLMEKLQQLPQISDVSSDWQDKGLVAYVNVDRDSASRLGISMADVDNALYNAFGQRLISTIYTQANQYRVVLEHNTENTPGLAALDTIRLTSSDGGVVPLSSIAKIEQRFAPLSINHLDQFPVTTISFNVPDNYSLGDAVQAIMDTEKTLNLPVDITTQFQGSTLAFQSALGSTVWLIVAAVVAMYIVLGILYESFIHPITILSTLPTAGVGALLALMIAGSELDVIAIIGIILLIGIVKKNAIMMIDFALAAEREQGMSPRDAIYQACLLRFRPILMTTLAALLGALPLMLSTGVGAELRRPLGIGMVGGLIVSQVLTLFTTPVIYLLFDRLALWTKSRFARHEEEA.

Transmembrane regions (helical) follow at residues 15–37, 345–362, 367–389, 396–418, 438–460, 472–494, 535–557, 867–889, 909–931, 968–990, and 1000–1022; these read LFIM…GIIG, FELM…YLFL, ATII…MVFL, LTLM…VIEN, GEIG…PLLF, FAIT…TPMM, HPWL…WVFI, VWLI…ESFI, LMIA…IGIV, ILMT…GVGA, and MVGG…YLLF.

It belongs to the resistance-nodulation-cell division (RND) (TC 2.A.6) family. MdtB subfamily. In terms of assembly, part of a tripartite efflux system composed of MdtA, MdtB and MdtC. MdtB forms a heteromultimer with MdtC.

Its subcellular location is the cell inner membrane. In terms of biological role, the MdtABC tripartite complex confers resistance against novobiocin and deoxycholate. This chain is Multidrug resistance protein MdtB, found in Escherichia coli O157:H7.